We begin with the raw amino-acid sequence, 117 residues long: Small ribosomal subunit protein eS25 (117 aa).

Residues 1–34 (MPPKKDPKGGKAPPSKKKEGSGGGKAKKKKWSKG) are disordered. A compositionally biased stretch (basic residues) spans 25–34 (KAKKKKWSKG).

The protein belongs to the eukaryotic ribosomal protein eS25 family.

The polypeptide is Small ribosomal subunit protein eS25 (rps-25) (Caenorhabditis elegans).